Here is a 105-residue protein sequence, read N- to C-terminus: Met repressor (105 aa).

It belongs to the MetJ family. Homodimer.

It localises to the cytoplasm. Its function is as follows. This regulatory protein, when combined with SAM (S-adenosylmethionine) represses the expression of the methionine regulon and of enzymes involved in SAM synthesis. This chain is Met repressor, found in Shigella boydii serotype 18 (strain CDC 3083-94 / BS512).